The following is a 146-amino-acid chain: Ribonuclease H (146 aa).

The 143-residue stretch at 1–143 folds into the RNase H type-1 domain; sequence MRKKIIIYTD…CDYLARQAIK (143 aa). Positions 10, 48, 70, and 135 each coordinate Mg(2+).

The protein belongs to the RNase H family. Monomer. Requires Mg(2+) as cofactor.

It is found in the cytoplasm. It catalyses the reaction Endonucleolytic cleavage to 5'-phosphomonoester.. In terms of biological role, endonuclease that specifically degrades the RNA of RNA-DNA hybrids. The protein is Ribonuclease H of Prosthecochloris aestuarii (strain DSM 271 / SK 413).